The sequence spans 54 residues: UPF0391 membrane protein Mpe_A2904 (54 aa).

The next 2 membrane-spanning stretches (helical) occupy residues 5–25 and 30–50; these read AVVFFIIALIAAVFGFGGIAA and IAKILFFVFVVLAVASFLFGL.

Belongs to the UPF0391 family.

Its subcellular location is the cell membrane. The chain is UPF0391 membrane protein Mpe_A2904 from Methylibium petroleiphilum (strain ATCC BAA-1232 / LMG 22953 / PM1).